Reading from the N-terminus, the 193-residue chain is Putative anthranilate synthase component II (193 aa).

The Glutamine amidotransferase type-1 domain maps to 2–193 (KLLIINNHDS…WLAIPPTTNP (192 aa)). Catalysis depends on residues cysteine 78, histidine 168, and glutamate 170.

Tetramer of two components I and two components II.

The catalysed reaction is chorismate + L-glutamine = anthranilate + pyruvate + L-glutamate + H(+). It participates in amino-acid biosynthesis; L-tryptophan biosynthesis; L-tryptophan from chorismate: step 1/5. This Haemophilus influenzae (strain ATCC 51907 / DSM 11121 / KW20 / Rd) protein is Putative anthranilate synthase component II.